The primary structure comprises 167 residues: Protein archease (167 aa).

An N-acetylalanine modification is found at Ala2. Positions 39, 166, and 167 each coordinate Ca(2+).

It belongs to the archease family. Component of the tRNA-splicing ligase complex.

In terms of biological role, component of the tRNA-splicing ligase complex required to facilitate the enzymatic turnover of catalytic subunit RTCB. Together with DDX1, acts by facilitating the guanylylation of RTCB, a key intermediate step in tRNA ligation. This chain is Protein archease (ZBTB8OS), found in Bos taurus (Bovine).